Consider the following 262-residue polypeptide: Endoplasmic reticulum chaperone BiP (262 aa).

8-11 (GSTR) lines the ATP pocket. The segment at 53–63 (QDTGDLVLLDV) is interdomain linker. The substrate-binding (SBD) stretch occupies residues 64–144 (CPLTLGIETV…PRGVPQIEVT (81 aa)). At Lys91 the chain carries N6-succinyllysine. Residue Arg136 is modified to Omega-N-methylarginine. O-AMP-threonine; alternate is present on Thr162. Phosphothreonine; alternate is present on Thr162. Lys229 carries the N6,N6,N6-trimethyllysine; by METTL21A; in vitro modification. At Lys229 the chain carries N6,N6-dimethyllysine; alternate. At Lys229 the chain carries N6-methyllysine; alternate. N6-methyllysine is present on Lys235.

The protein belongs to the heat shock protein 70 family. As to quaternary structure, monomer and homooligomer; homooligomerization via the interdomain linker inactivates the chaperone activity and acts as a storage of HSPA5/BiP molecules. Interacts with DNAJC1 (via J domain). Component of an EIF2 complex at least composed of CELF1/CUGBP1, CALR, CALR3, EIF2S1, EIF2S2, HSP90B1 and HSPA5. Part of a large chaperone multiprotein complex comprising DNAJB11, HSP90B1, HSPA5, HYOU, PDIA2, PDIA4, PDIA6, PPIB, SDF2L1, UGGT1 and very small amounts of ERP29, but not, or at very low levels, CALR nor CANX. Interacts with TMEM132A and TRIM21. May form a complex with ERLEC1, OS9, SEL1L and SYVN1. Interacts with DNAJC10. Interacts with DNAJB9/ERdj4; leading to recruit HSPA5/BiP to ERN1/IRE1. Interacts with ERN1/IRE1 (via luminal domain); the interaction takes place following interaction with DNAJB9/ERdj4 and leads to inactivate ERN1/IRE1, the interaction also competitively inhibits ERN1 interaction with MANF. Interacts directly with MANF (via SAP domain); the interaction inhibits ATP binding to HSPA5/BiP and subsequent nucleotide exchange. Interacts with EIF2AK3/PERK (via luminal domain); interaction leads to inactivate EIF2AK3/PERK. Interacts with MX1. Interacts with METTL23. Interacts with CEMIP; the interaction induces calcium leakage from the endoplasmic reticulum and cell migration. Interacts with PCSK4 form; the interaction takes place in the endoplasmic reticulum. Interacts with CIPC. Interacts with CCDC88B (via C-terminus); the interaction opposes ERN1-mediated JNK activation, protecting against apoptosis. Interacts with INPP5K; necessary for INPP5K localization at the endoplasmic reticulum. Interacts with MANF; the interaction is direct. Interacts with LOXL2; leading to activate the ERN1/IRE1-XBP1 pathway of the unfolded protein response. Interacts with CLU under stressed condition; interaction increases CLU protein stability; facilitates its retrotranslocation and redistribution to the mitochondria; cooperatively suppress stress-induced apoptosis by stabilizing mitochondrial membrane integrity. Interacts with CCDC47. Interacts with CLN3. Interacts with ELAPOR1; may regulate the function of HSPA5 in apoptosis and cell proliferation. Interacts with CASP7. Interacts with ILDR2; the interaction stabilizes ILDR2 expression. Interacts with ADAM7. In terms of processing, in unstressed cells, AMPylation at Thr-162 by FICD inactivates the chaperome activity: AMPylated form is locked in a relatively inert state and only weakly stimulated by J domain-containing proteins. In response to endoplasmic reticulum stress, de-AMPylation by the same protein, FICD, restores the chaperone activity.

It is found in the endoplasmic reticulum lumen. It localises to the melanosome. The protein localises to the cytoplasm. Its subcellular location is the cell surface. It carries out the reaction ATP + H2O = ADP + phosphate + H(+). Its activity is regulated as follows. The chaperone activity is regulated by ATP-induced allosteric coupling of the nucleotide-binding (NBD) and substrate-binding (SBD) domains. In the ADP-bound and nucleotide-free (apo) states, the two domains have little interaction. In contrast, in the ATP-bound state the two domains are tightly coupled, which results in drastically accelerated kinetics in both binding and release of polypeptide substrates. J domain-containing co-chaperones (DNAJB9/ERdj4 or DNAJC10/ERdj5) stimulate the ATPase activity and are required for efficient substrate recognition by HSPA5/BiP. Homooligomerization inactivates participating HSPA5/BiP protomers and probably act as reservoirs to store HSPA5/BiP molecules when they are not needed by the cell. In terms of biological role, endoplasmic reticulum chaperone that plays a key role in protein folding and quality control in the endoplasmic reticulum lumen. Involved in the correct folding of proteins and degradation of misfolded proteins via its interaction with DNAJC10/ERdj5, probably to facilitate the release of DNAJC10/ERdj5 from its substrate. Acts as a key repressor of the EIF2AK3/PERK and ERN1/IRE1-mediated unfolded protein response (UPR). In the unstressed endoplasmic reticulum, recruited by DNAJB9/ERdj4 to the luminal region of ERN1/IRE1, leading to disrupt the dimerization of ERN1/IRE1, thereby inactivating ERN1/IRE1. Also binds and inactivates EIF2AK3/PERK in unstressed cells. Accumulation of misfolded protein in the endoplasmic reticulum causes release of HSPA5/BiP from ERN1/IRE1 and EIF2AK3/PERK, allowing their homodimerization and subsequent activation. Plays an auxiliary role in post-translational transport of small presecretory proteins across endoplasmic reticulum (ER). May function as an allosteric modulator for SEC61 channel-forming translocon complex, likely cooperating with SEC62 to enable the productive insertion of these precursors into SEC61 channel. Appears to specifically regulate translocation of precursors having inhibitory residues in their mature region that weaken channel gating. May also play a role in apoptosis and cell proliferation. The protein is Endoplasmic reticulum chaperone BiP of Sus scrofa (Pig).